The primary structure comprises 882 residues: DNA polymerase 1 (882 aa).

The interval 1-31 (MTKQLTLFDIPSSKPAKSEQNTQQSQQSAPV) is disordered. The segment covering 18-29 (SEQNTQQSQQSA) has biased composition (polar residues).

Belongs to the DNA polymerase type-B family. Interacts with PCNA subunit PCNA2 and weakly with PCNA3.

The enzyme catalyses DNA(n) + a 2'-deoxyribonucleoside 5'-triphosphate = DNA(n+1) + diphosphate. DNA synthesis is stimulated by PCNA heterotrimers. Its function is as follows. This polymerase possesses two enzymatic activities: DNA synthesis (polymerase) and an exonucleolytic activity that degrades single-stranded DNA in the 3'- to 5'-direction. DNA polymerase I, DNA ligase and the flap endonuclease may be constitutively associated with the PCNA heterotrimer forming a scanning complex able to couple DNA synthesis and Okazaki fragment maturation. The chain is DNA polymerase 1 (dpo1) from Saccharolobus solfataricus (strain ATCC 35092 / DSM 1617 / JCM 11322 / P2) (Sulfolobus solfataricus).